The chain runs to 300 residues: GTPase Era (300 aa).

The Era-type G domain occupies 4–172 (KSGFVALAGK…LEKIKEELPE (169 aa)). Residues 12–19 (GKPNVGKS) form a G1 region. 12–19 (GKPNVGKS) serves as a coordination point for GTP. The tract at residues 38-42 (QTTRN) is G2. Residues 59 to 62 (DTPG) form a G3 region. Residues 59–63 (DTPGI) and 121–124 (NKID) each bind GTP. The segment at 121–124 (NKID) is G4. The tract at residues 151–153 (ISA) is G5. The KH type-2 domain maps to 195–280 (IREKIFHLTR…YLDLNVKVKE (86 aa)).

The protein belongs to the TRAFAC class TrmE-Era-EngA-EngB-Septin-like GTPase superfamily. Era GTPase family. Monomer.

The protein resides in the cytoplasm. Its subcellular location is the cell inner membrane. Functionally, an essential GTPase that binds both GDP and GTP, with rapid nucleotide exchange. Plays a role in 16S rRNA processing and 30S ribosomal subunit biogenesis and possibly also in cell cycle regulation and energy metabolism. This is GTPase Era from Thermotoga maritima (strain ATCC 43589 / DSM 3109 / JCM 10099 / NBRC 100826 / MSB8).